Reading from the N-terminus, the 332-residue chain is GTP cyclohydrolase-2 (332 aa).

Disordered stretches follow at residues 1-20 (MASKDIVHPQPERRHGSETH) and 25-46 (PLLSPTLTPSHIPSQTPQIPPE). Over residues 29–41 (PTLTPSHIPSQTP) the composition is skewed to polar residues. Position 171–175 (171–175 (RIHSE)) interacts with GTP. Residues Cys176, Cys187, and Cys189 each coordinate Zn(2+). Residues Gln192, 214 to 216 (EGR), and Thr236 each bind GTP. Catalysis depends on Asp248, which acts as the Proton acceptor. The active-site Nucleophile is Arg250. GTP-binding residues include Thr271 and Lys276.

The protein belongs to the GTP cyclohydrolase II family. Zn(2+) is required as a cofactor.

It carries out the reaction GTP + 4 H2O = 2,5-diamino-6-hydroxy-4-(5-phosphoribosylamino)-pyrimidine + formate + 2 phosphate + 3 H(+). The protein operates within cofactor biosynthesis; riboflavin biosynthesis; 5-amino-6-(D-ribitylamino)uracil from GTP: step 1/4. Functionally, catalyzes the conversion of GTP to 2,5-diamino-6-ribosylamino-4(3H)-pyrimidinone 5'-phosphate (DARP), formate and pyrophosphate. This is GTP cyclohydrolase-2 (RIB1) from Meyerozyma guilliermondii (strain ATCC 6260 / CBS 566 / DSM 6381 / JCM 1539 / NBRC 10279 / NRRL Y-324) (Yeast).